The primary structure comprises 451 residues: Phosphoglucosamine mutase (451 aa).

S107 functions as the Phosphoserine intermediate in the catalytic mechanism. Residues S107, D246, D248, and D250 each contribute to the Mg(2+) site. S107 carries the phosphoserine modification.

Belongs to the phosphohexose mutase family. It depends on Mg(2+) as a cofactor. Activated by phosphorylation.

It catalyses the reaction alpha-D-glucosamine 1-phosphate = D-glucosamine 6-phosphate. Catalyzes the conversion of glucosamine-6-phosphate to glucosamine-1-phosphate. This chain is Phosphoglucosamine mutase, found in Burkholderia ambifaria (strain ATCC BAA-244 / DSM 16087 / CCUG 44356 / LMG 19182 / AMMD) (Burkholderia cepacia (strain AMMD)).